A 439-amino-acid polypeptide reads, in one-letter code: Homogentisate 1,2-dioxygenase (439 aa).

Residue histidine 289 is the Proton acceptor of the active site. 2 residues coordinate Fe cation: histidine 332 and glutamate 338. Residues tyrosine 347 and histidine 368 each contribute to the homogentisate site. Histidine 368 lines the Fe cation pocket.

Belongs to the homogentisate dioxygenase family. As to quaternary structure, hexamer; dimer of trimers. Fe cation is required as a cofactor.

It carries out the reaction homogentisate + O2 = 4-maleylacetoacetate + H(+). It functions in the pathway amino-acid degradation; L-phenylalanine degradation; acetoacetate and fumarate from L-phenylalanine: step 4/6. In terms of biological role, involved in the catabolism of homogentisate (2,5-dihydroxyphenylacetate or 2,5-OH-PhAc), a central intermediate in the degradation of phenylalanine and tyrosine. Catalyzes the oxidative ring cleavage of the aromatic ring of homogentisate to yield maleylacetoacetate. The protein is Homogentisate 1,2-dioxygenase of Xanthomonas euvesicatoria pv. vesicatoria (strain 85-10) (Xanthomonas campestris pv. vesicatoria).